A 1470-amino-acid polypeptide reads, in one-letter code: Rap guanine nucleotide exchange factor (1470 aa).

2 disordered regions span residues 130-227 (PTEP…SYND) and 250-313 (HRRE…GGFM). Pro residues predominate over residues 173–183 (MPPPPVPPRPL). 2 stretches are compositionally biased toward low complexity: residues 184–193 (RLPQTAAKGP) and 215–224 (TTSSSSSNTS). A compositionally biased stretch (polar residues) spans 256–266 (NSVGGQAQNGI). Residues 275 to 292 (RSTASSTTTEGETASNEG) show a composition bias toward low complexity. A nucleoside 3',5'-cyclic phosphate is bound at residue 347–463 (AFAALPMSIK…IEKDRDGLTG (117 aa)). Residues 478–592 (CGQVLIKGKP…SLLNIACSVK (115 aa)) form the N-terminal Ras-GEF domain. The region spanning 597–679 (QVILTRRKDD…LTLMLKNNVL (83 aa)) is the PDZ domain. A Ras-associating domain is found at 782-869 (PEHVLKIYRN…SRYYLKNNSR (88 aa)). Residues 894 to 1124 (NAQVVAAQLT…FENSNVATMR (231 aa)) form the Ras-GEF domain. The segment covering 1176-1189 (QTAHRGANSSSTAN) has biased composition (polar residues). Disordered stretches follow at residues 1176–1213 (QTAH…DQSS), 1253–1326 (KVKG…NIPP), 1347–1370 (VIPT…PASS), and 1422–1455 (ATLP…RMGT). A compositionally biased stretch (low complexity) spans 1198 to 1211 (PSSLSSQSAGSADQ). Polar residues-rich tracts occupy residues 1260–1274 (QITS…SLQR) and 1282–1308 (RQAT…YQSD). The segment covering 1309 to 1321 (NGRRQRSGSEGRF) has biased composition (basic and acidic residues). The segment covering 1349–1370 (PTHPHGHSPTSPRCRSRSPASS) has biased composition (low complexity).

This sequence belongs to the RAPGEF2 family. As to expression, expressed in hermaphrodite-specific neurons (HSNs), oviduct sheath cells and lateral seam cells.

Its function is as follows. Acts as a guanine nucleotide exchange factor for small G protein GTPases like rap-1 and rap-2. Required in the hypodermis, especially in the seam cells, for proper formation of the cuticle. The sequence is that of Rap guanine nucleotide exchange factor (pxf-1) from Caenorhabditis elegans.